A 760-amino-acid polypeptide reads, in one-letter code: Photosystem I P700 chlorophyll a apoprotein A1 (760 aa).

The segment at 1 to 22 (MTISPPESGEKDKKILESPVKA) is disordered. A compositionally biased stretch (basic and acidic residues) spans 8 to 22 (SGEKDKKILESPVKA). 8 helical membrane passes run 76-99 (IFSA…FHGA), 162-185 (LMAL…FHYH), 201-225 (MNHH…HIGA), 309-327 (IAHH…GHMY), 368-391 (RHAQ…HHMY), 407-433 (LGLF…IAMV), 455-477 (ALIS…LYIH), and 551-569 (LMIH…LILL). [4Fe-4S] cluster contacts are provided by C593 and C602. Helical transmembrane passes span 609 to 630 (HVFL…HFSW) and 674 to 696 (ISMY…MFLF). H685 provides a ligand contact to divinylchlorophyll a'. 2 residues coordinate divinyl chlorophyll a: M693 and Y701. W702 contacts phylloquinone. A helical membrane pass occupies residues 734–754 (AVGVTHFLVGGIATTWAFFHA).

This sequence belongs to the PsaA/PsaB family. In terms of assembly, the PsaA/B heterodimer binds the P700 divinyl chlorophyll special pair and subsequent electron acceptors. PSI consists of a core antenna complex that captures photons, and an electron transfer chain that converts photonic excitation into a charge separation. The cyanobacterial PSI reaction center is composed of one copy each of PsaA,B,C,D,E,F,I,J,K,L,M and X, and forms trimeric complexes. The cofactor is PSI electron transfer chain: 5 divinyl chlorophyll a, 1 divinyl chlorophyll a', 2 phylloquinones and 3 4Fe-4S clusters. PSI core antenna: 90 divinyl chlorophyll a, 22 carotenoids, 3 phospholipids and 1 galactolipid. P700 is a divinyl chlorophyll a/divinyl chlorophyll a' dimer, A0 is one or more divinyl chlorophyll a, A1 is one or both phylloquinones and FX is a shared 4Fe-4S iron-sulfur center..

It localises to the cellular thylakoid membrane. The catalysed reaction is reduced [plastocyanin] + hnu + oxidized [2Fe-2S]-[ferredoxin] = oxidized [plastocyanin] + reduced [2Fe-2S]-[ferredoxin]. In terms of biological role, psaA and PsaB bind P700, the primary electron donor of photosystem I (PSI), as well as the electron acceptors A0, A1 and FX. PSI is a plastocyanin/cytochrome c6-ferredoxin oxidoreductase, converting photonic excitation into a charge separation, which transfers an electron from the donor P700 chlorophyll pair to the spectroscopically characterized acceptors A0, A1, FX, FA and FB in turn. Oxidized P700 is reduced on the lumenal side of the thylakoid membrane by plastocyanin or cytochrome c6. This is Photosystem I P700 chlorophyll a apoprotein A1 from Prochlorococcus marinus (strain MIT 9515).